The primary structure comprises 257 residues: Tryptophan synthase alpha chain (257 aa).

Residues E47 and D58 each act as proton acceptor in the active site.

This sequence belongs to the TrpA family. As to quaternary structure, tetramer of two alpha and two beta chains.

It carries out the reaction (1S,2R)-1-C-(indol-3-yl)glycerol 3-phosphate + L-serine = D-glyceraldehyde 3-phosphate + L-tryptophan + H2O. Its pathway is amino-acid biosynthesis; L-tryptophan biosynthesis; L-tryptophan from chorismate: step 5/5. In terms of biological role, the alpha subunit is responsible for the aldol cleavage of indoleglycerol phosphate to indole and glyceraldehyde 3-phosphate. The protein is Tryptophan synthase alpha chain of Listeria welshimeri serovar 6b (strain ATCC 35897 / DSM 20650 / CCUG 15529 / CIP 8149 / NCTC 11857 / SLCC 5334 / V8).